A 421-amino-acid chain; its full sequence is UDP-N-acetylglucosamine 1-carboxyvinyltransferase (421 aa).

Residue 22–23 (KN) coordinates phosphoenolpyruvate. R92 provides a ligand contact to UDP-N-acetyl-alpha-D-glucosamine. C116 (proton donor) is an active-site residue. A 2-(S-cysteinyl)pyruvic acid O-phosphothioketal modification is found at C116. Positions 307 and 329 each coordinate UDP-N-acetyl-alpha-D-glucosamine.

The protein belongs to the EPSP synthase family. MurA subfamily.

It localises to the cytoplasm. It carries out the reaction phosphoenolpyruvate + UDP-N-acetyl-alpha-D-glucosamine = UDP-N-acetyl-3-O-(1-carboxyvinyl)-alpha-D-glucosamine + phosphate. Its pathway is cell wall biogenesis; peptidoglycan biosynthesis. Functionally, cell wall formation. Adds enolpyruvyl to UDP-N-acetylglucosamine. The protein is UDP-N-acetylglucosamine 1-carboxyvinyltransferase of Kosmotoga olearia (strain ATCC BAA-1733 / DSM 21960 / TBF 19.5.1).